The following is a 141-amino-acid chain: Hemoglobin subunit alpha-2 (141 aa).

The Globin domain maps to 1-141 (VLSPADKNNV…VSTVLTSKYR (141 aa)). Residue His-58 participates in O2 binding. His-87 contributes to the heme b binding site.

Belongs to the globin family. As to quaternary structure, heterotetramer of two alpha chains and two beta chains. As to expression, red blood cells.

Involved in oxygen transport from the lung to the various peripheral tissues. This Varecia variegata (Black-and-white ruffed lemur) protein is Hemoglobin subunit alpha-2.